Consider the following 100-residue polypeptide: MSFAQFFVACCLAIVLLAVSNTRAAVQGPPLCQSGIVEEMPPHIRKVCQALENSDQLTSALKSYINNEASALVANSDDLLKNYNKRTDVDHVFLRFGKRR.

Residues 1–24 form the signal peptide; sequence MSFAQFFVACCLAIVLLAVSNTRA. Residues 25–84 constitute a propeptide that is removed on maturation; that stretch reads AVQGPPLCQSGIVEEMPPHIRKVCQALENSDQLTSALKSYINNEASALVANSDDLLKNYN. F96 carries the phenylalanine amide modification.

It belongs to the myosuppressin family.

It is found in the secreted. Myoinhibiting neuropeptide. The protein is Dromyosuppressin of Drosophila melanogaster (Fruit fly).